A 141-amino-acid polypeptide reads, in one-letter code: Large ribosomal subunit protein uL11 (141 aa).

The protein belongs to the universal ribosomal protein uL11 family. Part of the ribosomal stalk of the 50S ribosomal subunit. Interacts with L10 and the large rRNA to form the base of the stalk. L10 forms an elongated spine to which L12 dimers bind in a sequential fashion forming a multimeric L10(L12)X complex. Post-translationally, one or more lysine residues are methylated.

In terms of biological role, forms part of the ribosomal stalk which helps the ribosome interact with GTP-bound translation factors. The polypeptide is Large ribosomal subunit protein uL11 (Methylacidiphilum infernorum (isolate V4) (Methylokorus infernorum (strain V4))).